A 53-amino-acid chain; its full sequence is uncharacterized protein (53 aa).

The segment at 34 to 53 (RKEKGKRHAAPLSLMGVHKR) is disordered.

This is an uncharacterized protein from Treponema pallidum (strain Nichols).